The primary structure comprises 102 residues: Pyrimidine/purine nucleoside phosphorylase (102 aa).

It belongs to the nucleoside phosphorylase PpnP family.

The catalysed reaction is a purine D-ribonucleoside + phosphate = a purine nucleobase + alpha-D-ribose 1-phosphate. The enzyme catalyses adenosine + phosphate = alpha-D-ribose 1-phosphate + adenine. It carries out the reaction cytidine + phosphate = cytosine + alpha-D-ribose 1-phosphate. It catalyses the reaction guanosine + phosphate = alpha-D-ribose 1-phosphate + guanine. The catalysed reaction is inosine + phosphate = alpha-D-ribose 1-phosphate + hypoxanthine. The enzyme catalyses thymidine + phosphate = 2-deoxy-alpha-D-ribose 1-phosphate + thymine. It carries out the reaction uridine + phosphate = alpha-D-ribose 1-phosphate + uracil. It catalyses the reaction xanthosine + phosphate = alpha-D-ribose 1-phosphate + xanthine. Its function is as follows. Catalyzes the phosphorolysis of diverse nucleosides, yielding D-ribose 1-phosphate and the respective free bases. Can use uridine, adenosine, guanosine, cytidine, thymidine, inosine and xanthosine as substrates. Also catalyzes the reverse reactions. The protein is Pyrimidine/purine nucleoside phosphorylase of Shewanella amazonensis (strain ATCC BAA-1098 / SB2B).